The following is a 374-amino-acid chain: Putative zinc metalloprotease R01501 (374 aa).

Histidine 26 contacts Zn(2+). Glutamate 27 is a catalytic residue. Histidine 30 contacts Zn(2+). Helical transmembrane passes span 36-55 (WSGI…LFGW), 112-134 (AATV…AVLF), 301-323 (VLNF…VPVL), and 348-367 (LAFR…AAWN). Positions 126–199 (AIAIFAVLFS…LPITVRIERE (74 aa)) constitute a PDZ domain.

This sequence belongs to the peptidase M50B family. It depends on Zn(2+) as a cofactor.

Its subcellular location is the cell inner membrane. In Rhizobium meliloti (strain 1021) (Ensifer meliloti), this protein is Putative zinc metalloprotease R01501.